The chain runs to 222 residues: Adenylate kinase (222 aa).

16 to 21 contacts ATP; the sequence is GAGKGT. Residues 36–65 are NMP; it reads ATGDMLRSQISKGTELGLQAKKIMDQGGLV. AMP is bound by residues T37, R42, 63–65, 92–95, and Q99; these read GLV and GFPR. The segment at 133–170 is LID; it reads GRLIHPASGRSYHKLFNPPKEDMKDDVTGEPLVQRSDD. Residues R134 and 143–144 contribute to the ATP site; that span reads SY. Residues R167 and R178 each contribute to the AMP site. Q206 serves as a coordination point for ATP.

Belongs to the adenylate kinase family. AK2 subfamily. In terms of assembly, monomer.

Its subcellular location is the cytoplasm. The protein resides in the cytosol. It is found in the mitochondrion intermembrane space. It catalyses the reaction AMP + ATP = 2 ADP. Functionally, catalyzes the reversible transfer of the terminal phosphate group between ATP and AMP. Plays an important role in cellular energy homeostasis and in adenine nucleotide metabolism. Adenylate kinase activity is critical for regulation of the phosphate utilization and the AMP de novo biosynthesis pathways. The protein is Adenylate kinase of Candida glabrata (strain ATCC 2001 / BCRC 20586 / JCM 3761 / NBRC 0622 / NRRL Y-65 / CBS 138) (Yeast).